A 566-amino-acid polypeptide reads, in one-letter code: CTP synthase (566 aa).

The interval 1–282 (MSIKRAQLGG…DAYIIDQLGL (282 aa)) is amidoligase domain. Residue Ser-23 coordinates CTP. Ser-23 serves as a coordination point for UTP. ATP is bound by residues 24 to 29 (SLGKGL) and Asp-81. 2 residues coordinate Mg(2+): Asp-81 and Glu-156. CTP contacts are provided by residues 163–165 (DIE), 203–208 (KTKPTQ), and Lys-239. UTP contacts are provided by residues 203–208 (KTKPTQ) and Lys-239. The region spanning 308–556 (TIGLVGKYID…IGAALDRQKA (249 aa)) is the Glutamine amidotransferase type-1 domain. Residue Gly-371 coordinates L-glutamine. Cys-398 acts as the Nucleophile; for glutamine hydrolysis in catalysis. L-glutamine is bound by residues 399 to 402 (LGLQ), Glu-422, and Arg-482. Residues His-529 and Glu-531 contribute to the active site.

It belongs to the CTP synthase family. As to quaternary structure, homotetramer.

It catalyses the reaction UTP + L-glutamine + ATP + H2O = CTP + L-glutamate + ADP + phosphate + 2 H(+). The enzyme catalyses L-glutamine + H2O = L-glutamate + NH4(+). It carries out the reaction UTP + NH4(+) + ATP = CTP + ADP + phosphate + 2 H(+). It participates in pyrimidine metabolism; CTP biosynthesis via de novo pathway; CTP from UDP: step 2/2. With respect to regulation, allosterically activated by GTP, when glutamine is the substrate; GTP has no effect on the reaction when ammonia is the substrate. The allosteric effector GTP functions by stabilizing the protein conformation that binds the tetrahedral intermediate(s) formed during glutamine hydrolysis. Inhibited by the product CTP, via allosteric rather than competitive inhibition. Catalyzes the ATP-dependent amination of UTP to CTP with either L-glutamine or ammonia as the source of nitrogen. Regulates intracellular CTP levels through interactions with the four ribonucleotide triphosphates. In Leifsonia xyli subsp. xyli (strain CTCB07), this protein is CTP synthase.